We begin with the raw amino-acid sequence, 735 residues long: Delta-1-pyrroline-5-carboxylate synthase 2 (735 aa).

Residues 1–315 (MGRGGIGGAG…WGCSKEATAR (315 aa)) form a glutamate 5-kinase region. Substrate is bound by residues S79, D176, and N195. Residues 215–216 (SD), 221–226 (YSGPPS), and 255–261 (RGGMQAK) contribute to the ATP site. The gamma-glutamyl phosphate reductase stretch occupies residues 316–735 (EMAVAARDCS…VYTHRELPLQ (420 aa)).

The protein in the N-terminal section; belongs to the glutamate 5-kinase family. This sequence in the C-terminal section; belongs to the gamma-glutamyl phosphate reductase family.

It catalyses the reaction L-glutamate + ATP = L-glutamyl 5-phosphate + ADP. It carries out the reaction L-glutamate 5-semialdehyde + phosphate + NADP(+) = L-glutamyl 5-phosphate + NADPH + H(+). It functions in the pathway amino-acid biosynthesis; L-proline biosynthesis; L-glutamate 5-semialdehyde from L-glutamate: step 1/2. It participates in amino-acid biosynthesis; L-proline biosynthesis; L-glutamate 5-semialdehyde from L-glutamate: step 2/2. Feedback regulated by proline. Its function is as follows. P5CS plays a key role in proline biosynthesis, leading to osmoregulation in plants. Involved in abiotic stress tolerance. The polypeptide is Delta-1-pyrroline-5-carboxylate synthase 2 (Oryza sativa subsp. japonica (Rice)).